The chain runs to 190 residues: MELILGSQSSARANLLKEHGIKFEQKALYFDEESLKTTDPREFVYLACKGKLEKAKELLANNCVIVVADSVVSVDNRMQRKAQSKREALEFLKRQNGNEIEVLTCSALISPKLEWLDLSVFRARLKAFDPSEIEKYLESGLWQESAGCVRLEDFHRPYIKSSSKNLSVGLGLNVEGLLGALKLGAKIASL.

Asp-69 (proton acceptor) is an active-site residue.

It belongs to the Maf family. Requires a divalent metal cation as cofactor.

Its subcellular location is the cytoplasm. The catalysed reaction is a ribonucleoside 5'-triphosphate + H2O = a ribonucleoside 5'-phosphate + diphosphate + H(+). It catalyses the reaction a 2'-deoxyribonucleoside 5'-triphosphate + H2O = a 2'-deoxyribonucleoside 5'-phosphate + diphosphate + H(+). Nucleoside triphosphate pyrophosphatase. May have a dual role in cell division arrest and in preventing the incorporation of modified nucleotides into cellular nucleic acids. This chain is Nucleoside triphosphate pyrophosphatase, found in Helicobacter pylori (strain P12).